We begin with the raw amino-acid sequence, 168 residues long: Putative postmeiotic segregation increased 2-like protein 3 (168 aa).

The KRAB domain maps to 8-84 (VSFKDVAVDF…EGEFPCQHSP (77 aa)).

This sequence belongs to the DNA mismatch repair MutL/HexB family.

This is Putative postmeiotic segregation increased 2-like protein 3 (PMS2P3) from Homo sapiens (Human).